The primary structure comprises 342 residues: MKVELFDFDLPERLIAQVPLKERDASRLMVLDKKTGEITHSTFKHVIDFLNAGDCIVLNDTRVLPARLYGVKEETGAKVEVLLLKQEEGDVWETLVKPAKRVKRGTVLSFGDGRLTAVCTEELEHGGRKIEFRYEGIFYEVLESLGEMPLPPYIKEQLDDRERYQTVYSKKQGSAAAPTAGLHFTEEILDALREKGVHIAFITLHVGLGTFRPVSAENVEEHDMHAEFYEMSEETAALLNRVRQEGGRIISVGTTSTRTLETIASEHDGRFREASGWTSIFIYPGYTFRAIDGMITNFHLPKSSLIMLVSALAGREHVLSAYRTAVEHEYRFFSFGDAMLIK.

This sequence belongs to the QueA family. In terms of assembly, monomer.

It localises to the cytoplasm. The catalysed reaction is 7-aminomethyl-7-carbaguanosine(34) in tRNA + S-adenosyl-L-methionine = epoxyqueuosine(34) in tRNA + adenine + L-methionine + 2 H(+). It participates in tRNA modification; tRNA-queuosine biosynthesis. Transfers and isomerizes the ribose moiety from AdoMet to the 7-aminomethyl group of 7-deazaguanine (preQ1-tRNA) to give epoxyqueuosine (oQ-tRNA). The polypeptide is S-adenosylmethionine:tRNA ribosyltransferase-isomerase (Bacillus licheniformis (strain ATCC 14580 / DSM 13 / JCM 2505 / CCUG 7422 / NBRC 12200 / NCIMB 9375 / NCTC 10341 / NRRL NRS-1264 / Gibson 46)).